The primary structure comprises 41 residues: Large ribosomal subunit protein bL36 (41 aa).

Belongs to the bacterial ribosomal protein bL36 family.

The protein is Large ribosomal subunit protein bL36 of Erythrobacter litoralis (strain HTCC2594).